The sequence spans 286 residues: 33 kDa chaperonin (286 aa).

2 disulfide bridges follow: cysteine 225-cysteine 227 and cysteine 258-cysteine 261.

This sequence belongs to the HSP33 family. Under oxidizing conditions two disulfide bonds are formed involving the reactive cysteines. Under reducing conditions zinc is bound to the reactive cysteines and the protein is inactive.

The protein resides in the cytoplasm. Redox regulated molecular chaperone. Protects both thermally unfolding and oxidatively damaged proteins from irreversible aggregation. Plays an important role in the bacterial defense system toward oxidative stress. This chain is 33 kDa chaperonin, found in Shewanella sp. (strain ANA-3).